We begin with the raw amino-acid sequence, 191 residues long: Putative zinc metalloprotease MJ0611 (191 aa).

A helical membrane pass occupies residues 20–40 (AIAFIFSYPNFSILVFIISLI). Residue His-49 participates in Zn(2+) binding. Glu-50 is an active-site residue. His-53 is a binding site for Zn(2+). Helical transmembrane passes span 73–93 (LILG…PGAV), 110–130 (LAGP…MLIF), 133–153 (GSLL…LAGF), and 171–191 (PFIW…MMFW).

This sequence belongs to the peptidase M50B family. Requires Zn(2+) as cofactor.

It localises to the cell membrane. In Methanocaldococcus jannaschii (strain ATCC 43067 / DSM 2661 / JAL-1 / JCM 10045 / NBRC 100440) (Methanococcus jannaschii), this protein is Putative zinc metalloprotease MJ0611.